Consider the following 74-residue polypeptide: uncharacterized protein (74 aa).

A helical membrane pass occupies residues 52-72 (ITFGFTVLGLGIGMIFGDAGL).

The protein resides in the membrane. This is an uncharacterized protein from Methanocaldococcus jannaschii (strain ATCC 43067 / DSM 2661 / JAL-1 / JCM 10045 / NBRC 100440) (Methanococcus jannaschii).